We begin with the raw amino-acid sequence, 120 residues long: NAD(P)H-quinone oxidoreductase subunit 3, chloroplastic (120 aa).

The next 3 membrane-spanning stretches (helical) occupy residues isoleucine 9–glycine 29, methionine 64–methionine 84, and valine 88–leucine 108.

The protein belongs to the complex I subunit 3 family. NDH is composed of at least 16 different subunits, 5 of which are encoded in the nucleus.

It is found in the plastid. The protein resides in the chloroplast thylakoid membrane. The catalysed reaction is a plastoquinone + NADH + (n+1) H(+)(in) = a plastoquinol + NAD(+) + n H(+)(out). It catalyses the reaction a plastoquinone + NADPH + (n+1) H(+)(in) = a plastoquinol + NADP(+) + n H(+)(out). NDH shuttles electrons from NAD(P)H:plastoquinone, via FMN and iron-sulfur (Fe-S) centers, to quinones in the photosynthetic chain and possibly in a chloroplast respiratory chain. The immediate electron acceptor for the enzyme in this species is believed to be plastoquinone. Couples the redox reaction to proton translocation, and thus conserves the redox energy in a proton gradient. The chain is NAD(P)H-quinone oxidoreductase subunit 3, chloroplastic from Ranunculus macranthus (Large buttercup).